Reading from the N-terminus, the 518-residue chain is Metal transporter Nramp1 (518 aa).

The next 12 membrane-spanning stretches (helical) occupy residues 35–55, 68–88, 107–127, 131–151, 172–192, 218–238, 255–275, 315–337, 357–377, 382–402, 418–438, and 458–478; these read FLSHIGPGFMVCLAYLDPGNM, ELLWVILIGLIFALIIQSLSA, PVWVKTCLWLLAELAVIASDI, IGTGFAFNLLFHIPVWTGVLI, VVVALLVFVMAGCFFVEMSIV, IALLGALVMPHNLFLHSALVL, FFLFESGIALFVALLVNIAII, SATVYGVALLASGQSSTITGTYA, LMTRSIAIVPSLIVSIIGGSS, LIVIASMILSFELPFALIPLL, IYIVGFSWVLGFVIIGINIYF, and VLIGIVLFPLMLLYVVAVIYL.

Belongs to the NRAMP (TC 2.A.55) family.

Its subcellular location is the membrane. Functionally, probable metal transporter that may participate in the control of iron homeostasis. This Oryza sativa subsp. japonica (Rice) protein is Metal transporter Nramp1 (NRAMP1).